A 1138-amino-acid polypeptide reads, in one-letter code: Transmembrane channel-like protein 3 (1138 aa).

Over residues 1 to 15 the composition is skewed to low complexity; it reads MEAAPGTAAAAAKPA. 2 disordered regions span residues 1–20 and 29–54; these read MEAAPGTAAAAAKPAKSCKK and NIYTYQEPPHSNSDEDISEEKADSQD. Residues 1-155 are Cytoplasmic-facing; sequence MEAAPGTAAA…VASYFIFLRW (155 aa). The chain crosses the membrane as a helical span at residues 156-176; sequence LFGINIVLTIMTGAFVVLPEL. The Extracellular segment spans residues 177-202; sequence LAGAPFGSTVSKTIRQEDLKTAQDLD. Residues 203–223 traverse the membrane as a helical segment; that stretch reads TIWSLGGYLQYSVLFYGYYGS. The Cytoplasmic portion of the chain corresponds to 224 to 233; the sequence is DRKIGKAGYR. A helical transmembrane segment spans residues 234 to 254; sequence LPLAYFLVGMAVFAYSFIILL. The Extracellular portion of the chain corresponds to 255–327; the sequence is KKMAKNSRMS…KNLAVTISLR (73 aa). The N-linked (GlcNAc...) asparagine glycan is linked to asparagine 272. A helical transmembrane segment spans residues 328–348; that stretch reads IIANILVLLSLTGSIYIIYFV. The Cytoplasmic segment spans residues 349–369; the sequence is VDRSQKLENNKRELTLWEKNE. The helical transmembrane segment at 370–390 threads the bilayer; the sequence is VSVVVSLITMIAPSAFELVAA. The Extracellular portion of the chain corresponds to 391 to 401; sequence LEMYHPRTTLR. A helical membrane pass occupies residues 402-422; it reads FQLARVLVLYLGNLYSLIIAL. Over 423–508 the chain is Cytoplasmic; sequence LDKVNSMSVT…CWETYVGQEM (86 aa). The helical transmembrane segment at 509–529 threads the bilayer; the sequence is LKLSIIDMIFTVASILLIDFF. At 530–569 the chain is on the extracellular side; the sequence is RGLCVRYLSDCWCWDLESKFPEYGEFKIAENVLHLVYNQG. A helical transmembrane segment spans residues 570 to 590; the sequence is MIWMGAFFSPCLPAFNVLKLI. Residues 591-618 lie on the Cytoplasmic side of the membrane; it reads GLMYLRSWAVLTCNVPHQQVFRASRSNN. A helical membrane pass occupies residues 619–639; sequence FYLAMLLFMLFLCMLPTIFAI. Residues 640 to 676 lie on the Extracellular side of the membrane; the sequence is ARYKPSLSCGPFSGQEKIYDIVSETIQNDFPAWFNSV. The helical transmembrane segment at 677 to 697 threads the bilayer; the sequence is IAYISSPVVVLPALLLLFMLI. The Cytoplasmic segment spans residues 698–1138; that stretch reads YYLQSIARSL…EPNELVCSNV (441 aa). The segment covering 753–763 has biased composition (polar residues); the sequence is NSEGTRFQSLD. 3 disordered regions span residues 753-859, 973-1005, and 1065-1095; these read NSEG…RYPS, SPHPSEDEEDEEALGRHYVKRSHRPRSLSDLRP, and PKTKHMLEQSLTESDSVSIESSSDPQNSSND. The segment covering 764–773 has biased composition (basic and acidic residues); that stretch reads GSDKRPDKDG. Composition is skewed to polar residues over residues 777–795 and 804–813; these read SQESSVRASTPRKNGSVLN and TRIQTISQTV. The segment covering 828–845 has biased composition (low complexity); sequence TTPTTSASLTPAPSVSSA. Basic residues predominate over residues 989 to 998; the sequence is HYVKRSHRPR. The span at 1074 to 1095 shows a compositional bias: low complexity; the sequence is SLTESDSVSIESSSDPQNSSND.

This sequence belongs to the TMC family. As to expression, expressed in a range of tissues including cerebrum, cerebellum, retina, cochlea, lung, liver and heart. Also expressed in the apical, medial and basal portions of the basillar papilla.

The protein localises to the membrane. Probable component of an ion channel. In Gallus gallus (Chicken), this protein is Transmembrane channel-like protein 3.